Here is a 550-residue protein sequence, read N- to C-terminus: Arginine--tRNA ligase (550 aa).

The 'HIGH' region signature appears at A130–G140.

This sequence belongs to the class-I aminoacyl-tRNA synthetase family. Monomer.

Its subcellular location is the cytoplasm. It carries out the reaction tRNA(Arg) + L-arginine + ATP = L-arginyl-tRNA(Arg) + AMP + diphosphate. The polypeptide is Arginine--tRNA ligase (Mycolicibacterium gilvum (strain PYR-GCK) (Mycobacterium gilvum (strain PYR-GCK))).